The following is a 113-amino-acid chain: Photosystem II reaction center Psb28 protein (113 aa).

It belongs to the Psb28 family. In terms of assembly, part of the photosystem II complex.

It is found in the cellular thylakoid membrane. This is Photosystem II reaction center Psb28 protein from Prochlorococcus marinus (strain NATL1A).